We begin with the raw amino-acid sequence, 346 residues long: Protein RecA (346 aa).

64-71 (GPESSGKT) serves as a coordination point for ATP.

The protein belongs to the RecA family.

Its subcellular location is the cytoplasm. Functionally, can catalyze the hydrolysis of ATP in the presence of single-stranded DNA, the ATP-dependent uptake of single-stranded DNA by duplex DNA, and the ATP-dependent hybridization of homologous single-stranded DNAs. It interacts with LexA causing its activation and leading to its autocatalytic cleavage. In Bacillus pumilus (strain SAFR-032), this protein is Protein RecA.